Here is a 295-residue protein sequence, read N- to C-terminus: Bifunctional protein FolD (295 aa).

NADP(+)-binding positions include 166-168 (GRS), Ser191, and Ile232.

Belongs to the tetrahydrofolate dehydrogenase/cyclohydrolase family. In terms of assembly, homodimer.

The catalysed reaction is (6R)-5,10-methylene-5,6,7,8-tetrahydrofolate + NADP(+) = (6R)-5,10-methenyltetrahydrofolate + NADPH. The enzyme catalyses (6R)-5,10-methenyltetrahydrofolate + H2O = (6R)-10-formyltetrahydrofolate + H(+). The protein operates within one-carbon metabolism; tetrahydrofolate interconversion. Catalyzes the oxidation of 5,10-methylenetetrahydrofolate to 5,10-methenyltetrahydrofolate and then the hydrolysis of 5,10-methenyltetrahydrofolate to 10-formyltetrahydrofolate. The chain is Bifunctional protein FolD from Rhodopseudomonas palustris (strain HaA2).